Here is a 172-residue protein sequence, read N- to C-terminus: dCTP deaminase, dUMP-forming (172 aa).

DCTP is bound by residues 93-98, Asp111, 119-121, Gln138, and Tyr151; these read RSSVGR and TLE. The active-site Proton donor/acceptor is Glu121.

Belongs to the dCTP deaminase family. Homotrimer.

The catalysed reaction is dCTP + 2 H2O = dUMP + NH4(+) + diphosphate. It functions in the pathway pyrimidine metabolism; dUMP biosynthesis; dUMP from dCTP: step 1/1. Functionally, bifunctional enzyme that catalyzes both the deamination of dCTP to dUTP and the hydrolysis of dUTP to dUMP without releasing the toxic dUTP intermediate. This chain is dCTP deaminase, dUMP-forming, found in Hathewaya histolytica (Clostridium histolyticum).